Here is a 617-residue protein sequence, read N- to C-terminus: Ceramide transfer protein (617 aa).

The segment covering 1-11 (MSDNQSWNSSG) has biased composition (polar residues). A disordered region spans residues 1 to 23 (MSDNQSWNSSGSEEDLEPESGPP). Residues 23–117 (PVERCGVLSK…WIDSIEQHKS (95 aa)) form the PH domain. Residues 268-302 (REDSWQKRLDKEIEKRRRVEEAYKNAMTELKKKSH) adopt a coiled-coil conformation. The short motif at 320 to 326 (EFFDAVE) is the FFAT element. The segment at 341–382 (EKGRSHWPPSPPSSEAHTAAGSHRLVQAPPSCPPPTDLVSSS) is disordered. In terms of domain architecture, START spans 383–611 (DEHRFRIQVE…FTSYVQEKTA (229 aa)). Positions 466, 487, 524, and 572 each coordinate an N-acylsphing-4-enine.

The protein resides in the cytoplasm. The protein localises to the golgi apparatus. Its subcellular location is the endoplasmic reticulum. The enzyme catalyses N-hexadecanoylsphing-4-enine(in) = N-hexadecanoylsphing-4-enine(out). May mediate the intracellular trafficking of ceramide in a non-vesicular manner. This is Ceramide transfer protein (cert1) from Xenopus laevis (African clawed frog).